The chain runs to 105 residues: Serine protease inhibitor Kazal-type 6 (105 aa).

The N-terminal stretch at 1 to 23 (MKVAGVFLLLSLALLCFFSGEFS) is a signal peptide. Gln-24 carries the pyrrolidone carboxylic acid modification. Residues 49–105 (RLFQINCGEFRDPKVFCTRESDPLCGSDGQTYGNKCAFCKALEKSSGKINLKHRGKC) form the Kazal-like domain. Intrachain disulfides connect Cys-55–Cys-87, Cys-65–Cys-84, and Cys-73–Cys-105.

It localises to the secreted. Serine protease inhibitor selective for kallikreins. Efficiently inhibits KLK4, KLK5, KLK6, KLK7, KLK12, KLK13 and KLK14. Doesn't inhibit KLK8. The polypeptide is Serine protease inhibitor Kazal-type 6 (Spink6) (Rattus norvegicus (Rat)).